The chain runs to 241 residues: MVAISMREMLEAGVHFGHKTRYWNPKMKPFVFGSRNGIHIINLEFTVTMLNNALSELRKISARKGKILFVGTKRAASEAIKEAAGNCAQFFVHHRWLGGMLTNWKTVRQSIKRLKDLETQSQDGTFEKLTKKEALMRTRELNKLENSLGGIKNMGGLPDALFVIDANHEHIAVKEANNLGIPVFSIVDTNSDPDGIDFIIPGNDDAIRSIKLYLNAVSAAISEGRSENSVMQKEESLIETK.

This sequence belongs to the universal ribosomal protein uS2 family.

The chain is Small ribosomal subunit protein uS2 from Hamiltonella defensa subsp. Acyrthosiphon pisum (strain 5AT).